The primary structure comprises 139 residues: Short neuropeptide F (139 aa).

Positions 1–23 (MGRARRTVRAPAQHDALGGHALA) are excised as a propeptide. Residues 1–48 (MGRARRTVRAPAQHDALGGHALARKSVRSPSRRLRFGRRSDPDMPPQA) form a disordered region. Residues 22–37 (LARKSVRSPSRRLRFG) show a composition bias toward basic residues. A Phenylalanine amide modification is found at phenylalanine 36. Residues 40–62 (SDPDMPPQAPLDEMNELLSLREV) constitute a propeptide that is removed on maturation. The residue at position 70 (phenylalanine 70) is a Phenylalanine amide. A propeptide spanning residues 74 to 96 (SEERAVPHIFPQEFLTQEQDRAV) is cleaved from the precursor. Phenylalanine amide is present on phenylalanine 105. The propeptide occupies 109–139 (SDNNMFLLPYESALPQEVKANGSVEDDRQQE).

This sequence belongs to the NPY family. SNPF peptide 1: Expressed in corpora cardiaca (CC), corpora allata (CA), antennal lobe (AL) and gnathal ganglion (GNG) (at protein level). Expression in AL detected in all animals, in GNG in most animals, expression in CC and CA in some animals (at protein level). sNPF peptide 2: Expressed in corpora cardiaca (CC), corpora allata (CA), antennal lobe (AL) and gnathal ganglion (GNG) (at protein level). Expression in AL detected in all animals, in GNG, CC and CA in most animals (at protein level). sNPF peptide 3: Expressed in corpora cardiaca (CC), corpora allata (CA), antennal lobe (AL) and gnathal ganglion (GNG) (at protein level). Expression detected in all animals (at protein level).

The protein resides in the secreted. Plays a role in controlling food intake and regulating body size. The protein is Short neuropeptide F of Agrotis ipsilon (Black cutworm moth).